The chain runs to 508 residues: Aldehyde dehydrogenase family 7 member B4 (508 aa).

244–249 (GSSRVG) contributes to the NAD(+) binding site. Glutamate 266 functions as the Proton acceptor in the catalytic mechanism. Cysteine 300 acts as the Nucleophile in catalysis.

The protein belongs to the aldehyde dehydrogenase family. As to quaternary structure, homotetramer.

It catalyses the reaction an aldehyde + NAD(+) + H2O = a carboxylate + NADH + 2 H(+). The polypeptide is Aldehyde dehydrogenase family 7 member B4 (ALDH7B4) (Arabidopsis thaliana (Mouse-ear cress)).